A 147-amino-acid chain; its full sequence is Transthyretin (147 aa).

An N-terminal signal peptide occupies residues 1–20 (MASHRLLLLCLAGLVFVSEA). C30 is subject to Sulfocysteine. K35 provides a ligand contact to L-thyroxine. 4-carboxyglutamate is present on E62. S72 is modified (phosphoserine). E74 contributes to the L-thyroxine binding site. A glycan (N-linked (GlcNAc...) asparagine) is linked at N118. S137 provides a ligand contact to L-thyroxine.

It belongs to the transthyretin family. Homotetramer. Dimer of dimers. In the homotetramer, subunits assemble around a central channel that can accommodate two ligand molecules. Interacts with RBP4. Sulfonation of the reactive cysteine Cys-30 enhances the stability of the native conformation of TTR, avoiding misassembly of the protein leading to amyloid formation. Detected in brain.

Its subcellular location is the secreted. Its function is as follows. Thyroid hormone-binding protein. Probably transports thyroxine from the bloodstream to the brain. In Pan troglodytes (Chimpanzee), this protein is Transthyretin (TTR).